Reading from the N-terminus, the 229-residue chain is Cytochrome c oxidase subunit 2 (229 aa).

At 1–26 (MSTWANLGLQDSASPLMEQLIFFHDH) the chain is on the mitochondrial intermembrane side. The chain crosses the membrane as a helical span at residues 27–48 (ALLILVMITVLVGYLMFMLFFN). The Mitochondrial matrix segment spans residues 49–62 (SYVNRFLLHGQLIE). A helical transmembrane segment spans residues 63–82 (MIWTILPAIILLFIAMPSLR). The Mitochondrial intermembrane segment spans residues 83–229 (LLYLLDEINE…IKWISNSVNS (147 aa)). Residues histidine 161, cysteine 196, glutamate 198, cysteine 200, histidine 204, and methionine 207 each coordinate Cu cation. Glutamate 198 contacts Mg(2+).

Belongs to the cytochrome c oxidase subunit 2 family. As to quaternary structure, component of the cytochrome c oxidase (complex IV, CIV), a multisubunit enzyme composed of a catalytic core of 3 subunits and several supernumerary subunits. The complex exists as a monomer or a dimer and forms supercomplexes (SCs) in the inner mitochondrial membrane with ubiquinol-cytochrome c oxidoreductase (cytochrome b-c1 complex, complex III, CIII). The cofactor is Cu cation.

The protein resides in the mitochondrion inner membrane. It carries out the reaction 4 Fe(II)-[cytochrome c] + O2 + 8 H(+)(in) = 4 Fe(III)-[cytochrome c] + 2 H2O + 4 H(+)(out). Functionally, component of the cytochrome c oxidase, the last enzyme in the mitochondrial electron transport chain which drives oxidative phosphorylation. The respiratory chain contains 3 multisubunit complexes succinate dehydrogenase (complex II, CII), ubiquinol-cytochrome c oxidoreductase (cytochrome b-c1 complex, complex III, CIII) and cytochrome c oxidase (complex IV, CIV), that cooperate to transfer electrons derived from NADH and succinate to molecular oxygen, creating an electrochemical gradient over the inner membrane that drives transmembrane transport and the ATP synthase. Cytochrome c oxidase is the component of the respiratory chain that catalyzes the reduction of oxygen to water. Electrons originating from reduced cytochrome c in the intermembrane space (IMS) are transferred via the dinuclear copper A center (CU(A)) of subunit 2 and heme A of subunit 1 to the active site in subunit 1, a binuclear center (BNC) formed by heme A3 and copper B (CU(B)). The BNC reduces molecular oxygen to 2 water molecules using 4 electrons from cytochrome c in the IMS and 4 protons from the mitochondrial matrix. The chain is Cytochrome c oxidase subunit 2 (mt:CoII) from Drosophila miranda (Fruit fly).